We begin with the raw amino-acid sequence, 264 residues long: Meiotically up-regulated gene 162 protein (264 aa).

A run of 7 helical transmembrane segments spans residues 18–38 (IVIF…WNLK), 54–74 (LWIY…AGSA), 84–104 (VFQV…GYSF), 140–160 (IISI…LLFL), 174–194 (HLSY…IKLI), 199–219 (FVLG…SLIT), and 223–243 (LISY…IWIY).

It is found in the endoplasmic reticulum membrane. Functionally, has a role in meiosis. The polypeptide is Meiotically up-regulated gene 162 protein (mug162) (Schizosaccharomyces pombe (strain 972 / ATCC 24843) (Fission yeast)).